The primary structure comprises 314 residues: Ribosomal RNA small subunit methyltransferase H 2 (314 aa).

S-adenosyl-L-methionine contacts are provided by residues 33-35, aspartate 53, tyrosine 80, aspartate 101, and glutamine 108; that span reads AGH. Residues 293-314 are disordered; the sequence is KELEENSRSKSAKLRVFEKNDL.

Belongs to the methyltransferase superfamily. RsmH family.

It localises to the cytoplasm. It carries out the reaction cytidine(1402) in 16S rRNA + S-adenosyl-L-methionine = N(4)-methylcytidine(1402) in 16S rRNA + S-adenosyl-L-homocysteine + H(+). Its function is as follows. Specifically methylates the N4 position of cytidine in position 1402 (C1402) of 16S rRNA. This Agathobacter rectalis (strain ATCC 33656 / DSM 3377 / JCM 17463 / KCTC 5835 / VPI 0990) (Eubacterium rectale) protein is Ribosomal RNA small subunit methyltransferase H 2.